A 263-amino-acid polypeptide reads, in one-letter code: Nuclear egress protein 2 (263 aa).

Over 1–235 the chain is Perinuclear space; sequence MASGKKLIDQ…STSLTGRCPS (235 aa). A helical membrane pass occupies residues 236-256; the sequence is WGAACALLLLSLAVGLMAILA. Residues 257–263 lie on the Nuclear side of the membrane; sequence AKLMQWP.

This sequence belongs to the herpesviridae NEC2 protein family. Forms a heterohexameric complex with NEC1. Phosphorylated.

The protein localises to the host nucleus inner membrane. Plays an essential role in virion nuclear egress, the first step of virion release from infected cell. Within the host nucleus, NEC1 interacts with the newly formed capsid through the vertexes and directs it to the inner nuclear membrane by associating with NEC2. Induces the budding of the capsid at the inner nuclear membrane as well as its envelopment into the perinuclear space. There, the NEC1/NEC2 complex promotes the fusion of the enveloped capsid with the outer nuclear membrane and the subsequent release of the viral capsid into the cytoplasm where it will reach the secondary budding sites in the host Golgi or trans-Golgi network. The protein is Nuclear egress protein 2 of Connochaetes taurinus (Blue wildebeest).